Reading from the N-terminus, the 354-residue chain is Ornithine cyclodeaminase (354 aa).

Residues Arg53 and Lys77 each contribute to the L-ornithine site. Residues Thr92, Arg120, 147–148 (AQ), Asp169, Thr209, 232–235 (VGGD), Lys239, and Ser300 contribute to the NAD(+) site. Arg120 lines the L-ornithine pocket. Asp235 contributes to the L-ornithine binding site. The active-site Proton donor/acceptor is the Asp235. L-ornithine is bound at residue Val301.

This sequence belongs to the ornithine cyclodeaminase/mu-crystallin family. Requires NAD(+) as cofactor.

The catalysed reaction is L-ornithine = L-proline + NH4(+). It functions in the pathway amino-acid biosynthesis; L-proline biosynthesis; L-proline from L-ornithine: step 1/1. Is subject to substrate inhibition. Is regulated by L-arginine, which stimulates enzymatic activity at 0.1-1 mM while inhibits activity at higher concentrations, and has pronounced effects on the optima for pH and temperature and on the Km for L-ornithine. Is not inhibited by L-proline. In terms of biological role, catalyzes the conversion of L-ornithine into L-proline with release of ammonia. Is involved in the utilization of nopaline, a catabolic pathway that proceeds through L-arginine and L-ornithine to L-proline. Nopaline is a predominant opine in plant cells transformed with Ti plasmid pTiC58. In Agrobacterium fabrum (strain C58 / ATCC 33970) (Agrobacterium tumefaciens (strain C58)), this protein is Ornithine cyclodeaminase.